The primary structure comprises 508 residues: Asparagine--tRNA ligase (508 aa).

This sequence belongs to the class-II aminoacyl-tRNA synthetase family. Homodimer.

It is found in the cytoplasm. It catalyses the reaction tRNA(Asn) + L-asparagine + ATP = L-asparaginyl-tRNA(Asn) + AMP + diphosphate + H(+). The chain is Asparagine--tRNA ligase from Streptococcus suis (strain 05ZYH33).